Consider the following 62-residue polypeptide: Large ribosomal subunit protein bL33 (62 aa).

The protein belongs to the bacterial ribosomal protein bL33 family.

In Parabacteroides distasonis (strain ATCC 8503 / DSM 20701 / CIP 104284 / JCM 5825 / NCTC 11152), this protein is Large ribosomal subunit protein bL33.